Reading from the N-terminus, the 215-residue chain is Riboflavin synthase (215 aa).

Lumazine-binding repeat units lie at residues 1–96 (MFTG…FGGH) and 97–193 (FVSG…YRFL). Residues 4 to 6 (GII), 47 to 49 (CLT), 61 to 66 (DVMPET), 100 to 102 (GHV), Lys135, 144 to 146 (SLT), and 158 to 163 (SLIPHT) contribute to the 2,4-dihydroxypteridine site.

As to quaternary structure, homotrimer. Can interact with 6,7-dimethyl-8-ribityllumazine synthase, forming a lumazine synthase/riboflavin synthase complex, also designated as 'heavy riboflavin synthase complex', which consists of a trimer of riboflavin synthase enclosed within an icosahedral structure composed of 60 subunits of 6,7-dimethyl-8-ribityllumazine synthase.

It carries out the reaction 2 6,7-dimethyl-8-(1-D-ribityl)lumazine + H(+) = 5-amino-6-(D-ribitylamino)uracil + riboflavin. The protein operates within cofactor biosynthesis; riboflavin biosynthesis; riboflavin from 2-hydroxy-3-oxobutyl phosphate and 5-amino-6-(D-ribitylamino)uracil: step 2/2. With respect to regulation, is activated by sulfite ions. In terms of biological role, catalyzes the dismutation of two molecules of 6,7-dimethyl-8-ribityllumazine, resulting in the formation of riboflavin and 5-amino-6-(D-ribitylamino)uracil. The sequence is that of Riboflavin synthase (ribE) from Bacillus subtilis (strain 168).